Consider the following 567-residue polypeptide: DNA ligase B (567 aa).

The N6-AMP-lysine intermediate role is filled by K132.

It belongs to the NAD-dependent DNA ligase family. LigB subfamily.

It carries out the reaction NAD(+) + (deoxyribonucleotide)n-3'-hydroxyl + 5'-phospho-(deoxyribonucleotide)m = (deoxyribonucleotide)n+m + AMP + beta-nicotinamide D-nucleotide.. Functionally, catalyzes the formation of phosphodiester linkages between 5'-phosphoryl and 3'-hydroxyl groups in double-stranded DNA using NAD as a coenzyme and as the energy source for the reaction. The protein is DNA ligase B of Yersinia pestis.